A 407-amino-acid chain; its full sequence is Na(+)-translocating NADH-quinone reductase subunit F (407 aa).

A helical transmembrane segment spans residues 3 to 23; that stretch reads IILGVVMFTLIVLALVLVILF. A 2Fe-2S ferredoxin-type domain is found at 32–126; that stretch reads GDITISINGD…DMDIELPEEI (95 aa). Cys69, Cys75, Cys78, and Cys110 together coordinate [2Fe-2S] cluster. The FAD-binding FR-type domain maps to 129–269; the sequence is VKKWECTVIS…SGPFGEFFAK (141 aa). A catalytic region spans residues 272–389; the sequence is DAEMVFIGGG…PMMNAAVIGM (118 aa).

It belongs to the NqrF family. In terms of assembly, composed of six subunits; NqrA, NqrB, NqrC, NqrD, NqrE and NqrF. The cofactor is [2Fe-2S] cluster. Requires FAD as cofactor.

It localises to the cell inner membrane. The catalysed reaction is a ubiquinone + n Na(+)(in) + NADH + H(+) = a ubiquinol + n Na(+)(out) + NAD(+). Functionally, NQR complex catalyzes the reduction of ubiquinone-1 to ubiquinol by two successive reactions, coupled with the transport of Na(+) ions from the cytoplasm to the periplasm. The first step is catalyzed by NqrF, which accepts electrons from NADH and reduces ubiquinone-1 to ubisemiquinone by a one-electron transfer pathway. The protein is Na(+)-translocating NADH-quinone reductase subunit F of Vibrio anguillarum (Listonella anguillarum).